The chain runs to 255 residues: 14-3-3 protein 5 (255 aa).

It belongs to the 14-3-3 family. In terms of assembly, homodimer.

This chain is 14-3-3 protein 5 (TFT5), found in Solanum lycopersicum (Tomato).